The primary structure comprises 146 residues: Protein new-glue 3 (146 aa).

An N-terminal signal peptide occupies residues 1–23; it reads MRYSCVLLLLATVACLLIPQTGG. Positions 23–146 are disordered; the sequence is GSTATTTSTS…RRARSARRLS (124 aa). The span at 24-66 shows a compositional bias: low complexity; that stretch reads STATTTSTSASATTTTSASATTTTASDTTTTTAATTTTSSSSS. 4 repeat units span residues 31–38, 39–46, 47–53, and 54–61. A 4 X 8 AA approximate tandem repeats of T-S-A-S-A-T-T-T region spans residues 31 to 61; it reads TSASATTTTSASATTTTASDTTTTTAATTTT. Over residues 67–92 the composition is skewed to basic residues; the sequence is KSKKKKRTYHYTRHVYRPKRIRHIYR. A compositionally biased stretch (basic and acidic residues) spans 93-106; the sequence is HKADDDESSTDRTS. Residues 116–132 show a composition bias toward low complexity; it reads SSSSSSSGSTSSRSGNS. Over residues 133–146 the composition is skewed to basic residues; the sequence is RIRRRRARSARRLS.

As to expression, salivary gland specific.

It localises to the secreted. The chain is Protein new-glue 3 (ng3) from Drosophila melanogaster (Fruit fly).